Here is a 700-residue protein sequence, read N- to C-terminus: Elongation factor G (700 aa).

The tr-type G domain occupies 8-290; the sequence is ERYRNIGISA…AVVEYLPAPT (283 aa). GTP contacts are provided by residues 17-24, 88-92, and 142-145; these read AHIDAGKT, DTPGH, and NKMD.

The protein belongs to the TRAFAC class translation factor GTPase superfamily. Classic translation factor GTPase family. EF-G/EF-2 subfamily.

The protein localises to the cytoplasm. In terms of biological role, catalyzes the GTP-dependent ribosomal translocation step during translation elongation. During this step, the ribosome changes from the pre-translocational (PRE) to the post-translocational (POST) state as the newly formed A-site-bound peptidyl-tRNA and P-site-bound deacylated tRNA move to the P and E sites, respectively. Catalyzes the coordinated movement of the two tRNA molecules, the mRNA and conformational changes in the ribosome. The sequence is that of Elongation factor G from Haemophilus influenzae (strain 86-028NP).